The following is a 197-amino-acid chain: Large ribosomal subunit protein eL15 (197 aa).

The span at 163–172 shows a compositional bias: basic residues; that stretch reads GKTSAGRKGR. The interval 163-197 is disordered; sequence GKTSAGRKGRGMQTRGTGTEKTRPSVRSNLNRSKK. The span at 186–197 shows a compositional bias: polar residues; sequence PSVRSNLNRSKK.

Belongs to the eukaryotic ribosomal protein eL15 family.

This chain is Large ribosomal subunit protein eL15, found in Methanococcoides burtonii (strain DSM 6242 / NBRC 107633 / OCM 468 / ACE-M).